Here is an 851-residue protein sequence, read N- to C-terminus: DNA mismatch repair protein MutS (851 aa).

An ATP-binding site is contributed by 602 to 609 (GPNMSGKS).

Belongs to the DNA mismatch repair MutS family.

Functionally, this protein is involved in the repair of mismatches in DNA. It is possible that it carries out the mismatch recognition step. This protein has a weak ATPase activity. The polypeptide is DNA mismatch repair protein MutS (Streptococcus pyogenes serotype M3 (strain SSI-1)).